The primary structure comprises 201 residues: Histidinol dehydrogenase (201 aa).

The protein belongs to the histidinol dehydrogenase family. Homodimer. It depends on Zn(2+) as a cofactor.

It carries out the reaction L-histidinol + 2 NAD(+) + H2O = L-histidine + 2 NADH + 3 H(+). It functions in the pathway amino-acid biosynthesis; L-histidine biosynthesis; L-histidine from 5-phospho-alpha-D-ribose 1-diphosphate: step 9/9. Catalyzes the sequential NAD-dependent oxidations of L-histidinol to L-histidinaldehyde and then to L-histidine. This is Histidinol dehydrogenase (hisD) from Buchnera aphidicola subsp. Schlechtendalia chinensis.